Reading from the N-terminus, the 470-residue chain is Zinc finger protein pat-9 (470 aa).

Residues 1 to 25 (MENRTPMQHHSGYEIVKSEPPSTPK) form a disordered region. 3 C2H2-type zinc fingers span residues 84–106 (YPCNLCSSKFGSKMELEEHQNSH), 112–134 (FECDTCNARFNRRSTLWNHKRIH), and 140–162 (FVCTVCQMTFKWKNSLKCHKDMH). Residues 191–235 (MEQEENGGLPASSSASSVISHPLITTTSGNKKRSKAAKAKQTPSS) form a disordered region. Positions 221–230 (KKRSKAAKAK) match the Nuclear localization signal motif.

Belongs to the krueppel C2H2-type zinc-finger protein family. As to expression, expressed in body wall muscle and gonad (at protein level).

It is found in the nucleus. It localises to the chromosome. In terms of biological role, probable transcription factor; required for proper organization of muscle myofilaments and for their recruitment to the M line. In Caenorhabditis elegans, this protein is Zinc finger protein pat-9.